A 989-amino-acid polypeptide reads, in one-letter code: MESMKQLKNHNVDLISNNDPLDKNRLLIEDLWESVLREECPNDQANRLMKLKELSYCNQVEEDISRTFKNEIVDIVNSMDLAESISAARAFSLYFQLVNILEQRVEEDRYIQSFTNKNNQKSHDNLDPFAPALARQNAPVTFRELFYRLRKLNVPPGKLEELLQEMDIRLVFTAHPTEIVRHTIRHKQTRVANLLQKIQVEKFLTVEDIKSLKIQLKEEIRLWWRTDELHQFKPSVIDEVDYALHYFQQVLFNAMPQLRGRISSALTENYPDVQMPTESFCTFGSWVGSDRDGNPSVTPEITWRTACYQRKLMLERYISATSNLRDQLSVSMQWSQVSSSLLESLETDRVQFPEIYEARATRYRSEPYRLKLSYILEKLRLTKERNNLLAEAGWKFSLERESDNKNIELVEKLHYRSVDEFTYDLELIKNSLNSTDLTCEAVSKLLTQVHIFGFSLASLDIRQESTRHSDAIQELTNYLELPKKYDQMPEIERIEWLKDELNTKRPLIPAEVSWTKSTEETFSVFKMVKRLQEEFGSRICHSYVISMSHSASDLLEVLLLAKEMGLIDQSSQKSKLLVVPLFETVEDLKRAPEVMEQLFQLDFYRSLLPKVGERFKPIQELMLGYSDSNKDSGFLSSNWEIHRAQIALQNLSSKNNILLRLFHGRGGSVGRGGGPAYQAILAQPSGTLKGRIKITEQGEVLASKYSLPELALYNLETVTTAVIQNSLVINRLDATPEWNDLMTRLAETSRIQYRKLVHENPNLLTFFQEVTPIEEISKLQISSRPARRKKGAKDLSSLRAIPWVFGWTQSRFLLPSWFGVGTALSVELKSDPEQIELLRVLHQRWPFFRMLISKVEMTLSKVDLEVAKYYVDTLGSKENAKSFGDIFDVISKEYNLTKSLVLEITGKNKLLESDRDLRLSVNLRNKTIIPLGFLQVSLLRRLRDQTRQPPISEFLNERNESERAYSRSELLRGALLTINGIAAGMRNTG.

Residues histidine 175 and lysine 630 contribute to the active site.

This sequence belongs to the PEPCase type 1 family. Requires Mg(2+) as cofactor.

It carries out the reaction oxaloacetate + phosphate = phosphoenolpyruvate + hydrogencarbonate. Its function is as follows. Forms oxaloacetate, a four-carbon dicarboxylic acid source for the tricarboxylic acid cycle. This chain is Phosphoenolpyruvate carboxylase, found in Prochlorococcus marinus (strain MIT 9515).